A 333-amino-acid chain; its full sequence is Diacylglycerol acyltransferase/mycolyltransferase Ag85C (333 aa).

A signal peptide spans 1–44 (MKFLQQMRKLFGLAAKFPARLTIAVIGTALLAGLVGVVGDTAIA). 86–87 (LR) lines the substrate pocket. The segment at 102-112 (FEEYYHSGLSV) is fibronectin-binding. Residues S170 and N198 each coordinate substrate. The Nucleophile role is filled by S170. Residue E274 is part of the active site. Substrate contacts are provided by residues 276 to 279 (LTLS) and 306 to 308 (HSW). The active site involves H306.

The protein belongs to the mycobacterial A85 antigen family. In terms of assembly, homodimer.

The protein resides in the secreted. It carries out the reaction an acyl-CoA + a 1,2-diacyl-sn-glycerol = a triacyl-sn-glycerol + CoA. It catalyses the reaction 2 alpha,alpha'-trehalose 6-mycolate = alpha,alpha'-trehalose 6,6'-bismycolate + alpha,alpha-trehalose. In terms of biological role, the antigen 85 proteins (FbpA, FbpB, FbpC) are responsible for the high affinity of mycobacteria to fibronectin, a large adhesive glycoprotein, which facilitates the attachment of M.tuberculosis to murine alveolar macrophages (AMs). They also help to maintain the integrity of the cell wall by catalyzing the transfer of mycolic acids to cell wall arabinogalactan and through the synthesis of alpha,alpha-trehalose dimycolate (TDM, cord factor). They catalyze the transfer of a mycoloyl residue from one molecule of alpha,alpha-trehalose monomycolate (TMM) to another TMM, leading to the formation of TDM. This Mycobacterium leprae (strain TN) protein is Diacylglycerol acyltransferase/mycolyltransferase Ag85C (fbpC).